The chain runs to 695 residues: ATP-dependent permease MDL1, mitochondrial (695 aa).

The transit peptide at 1–100 (MIVRMIRLCK…RLFVLSKPES (100 aa)) directs the protein to the mitochondrion. Helical transmembrane passes span 103 to 123 (IGLALLLILISSSVSMAVPSV), 156 to 176 (FTALGAVFIIGAVANASRIII), 242 to 262 (FVGFGMMSFLSWKLTCVMMIL), 337 to 357 (GLFFGSTGLVGNTAMLSLLLV), and 372 to 392 (LSSFMMYAVYTGSSLFGLSSF). Residues 103–398 (IGLALLLILI…LSSFYSELMK (296 aa)) form the ABC transmembrane type-1 domain. In terms of domain architecture, ABC transporter spans 432–673 (IVFKNVSFTY…PNSELNALLA (242 aa)). 467–474 (GPSGSGKS) lines the ATP pocket.

The protein belongs to the ABC transporter superfamily. ABCB family. Mitochondrial peptide exporter (TC 3.A.1.212) subfamily.

It localises to the mitochondrion inner membrane. In terms of biological role, mediates export of peptides with molecular masses of 2100 to 600 daltons generated upon proteolysis of mitochondrial inner membrane proteins. In Saccharomyces cerevisiae (strain ATCC 204508 / S288c) (Baker's yeast), this protein is ATP-dependent permease MDL1, mitochondrial (MDL1).